The chain runs to 285 residues: MKTVAVLSKPSKPELSEIIPPLQEWLGQHGYEVIFDQQSAIYVSGIHGVERAKIAAMHPEFAIVLGGDGTLLSAARAVAPAGIPILAVNLGSLGFLTEVPLQDMYSTLERVIACNCPLDERTMLACDLIRDGQVLHSYTSLNDVVVNKSAIARLVGFDVSIDGRFVFNYKADGVIVATPTGSTAYSLAAGGPVLMPAVGAFQITPVCPHSLTHRPVVVPETATISIVVRSNGEAAFLTIDGQVGQPLKEGDEIVCRKADHAVKLLQMRQSFFKVLREKLKWGERE.

D68 serves as the catalytic Proton acceptor. Residues 68–69, 142–143, R153, K170, D172, and Q242 each bind NAD(+); these read DG and ND.

The protein belongs to the NAD kinase family. It depends on a divalent metal cation as a cofactor.

The protein localises to the cytoplasm. It catalyses the reaction NAD(+) + ATP = ADP + NADP(+) + H(+). Functionally, involved in the regulation of the intracellular balance of NAD and NADP, and is a key enzyme in the biosynthesis of NADP. Catalyzes specifically the phosphorylation on 2'-hydroxyl of the adenosine moiety of NAD to yield NADP. The polypeptide is NAD kinase (Koribacter versatilis (strain Ellin345)).